A 148-amino-acid chain; its full sequence is Phosphopantetheine adenylyltransferase (148 aa).

The protein belongs to the eukaryotic CoaD family.

The protein localises to the cytoplasm. It catalyses the reaction (R)-4'-phosphopantetheine + ATP + H(+) = 3'-dephospho-CoA + diphosphate. It functions in the pathway cofactor biosynthesis; coenzyme A biosynthesis. Functionally, reversibly transfers an adenylyl group from ATP to 4'-phosphopantetheine, yielding dephospho-CoA (dPCoA) and pyrophosphate. The chain is Phosphopantetheine adenylyltransferase from Archaeoglobus fulgidus (strain ATCC 49558 / DSM 4304 / JCM 9628 / NBRC 100126 / VC-16).